The primary structure comprises 278 residues: Diaminopimelate epimerase (278 aa).

Residues Asn-13, Gln-49, and Asn-68 each coordinate substrate. Cys-77 serves as the catalytic Proton donor. Residues Gly-78–Asn-79, Asn-161, Asn-194, and Glu-212–Arg-213 contribute to the substrate site. The active-site Proton acceptor is the Cys-221. Residue Gly-222–Thr-223 participates in substrate binding.

It belongs to the diaminopimelate epimerase family. Homodimer.

The protein resides in the cytoplasm. The catalysed reaction is (2S,6S)-2,6-diaminopimelate = meso-2,6-diaminopimelate. The protein operates within amino-acid biosynthesis; L-lysine biosynthesis via DAP pathway; DL-2,6-diaminopimelate from LL-2,6-diaminopimelate: step 1/1. Functionally, catalyzes the stereoinversion of LL-2,6-diaminopimelate (L,L-DAP) to meso-diaminopimelate (meso-DAP), a precursor of L-lysine and an essential component of the bacterial peptidoglycan. In Nitrosomonas eutropha (strain DSM 101675 / C91 / Nm57), this protein is Diaminopimelate epimerase.